A 142-amino-acid chain; its full sequence is Putative pre-16S rRNA nuclease (142 aa).

Belongs to the YqgF nuclease family.

It localises to the cytoplasm. In terms of biological role, could be a nuclease involved in processing of the 5'-end of pre-16S rRNA. In Blochmanniella floridana, this protein is Putative pre-16S rRNA nuclease.